We begin with the raw amino-acid sequence, 223 residues long: Octanoyltransferase (223 aa).

The BPL/LPL catalytic domain maps to 32–207 (DETPDEIWLV…HFAHHLAITD (176 aa)). Substrate contacts are provided by residues 71-78 (RGGQVTYH), 138-140 (SLG), and 151-153 (GLA). Catalysis depends on C169, which acts as the Acyl-thioester intermediate.

Belongs to the LipB family.

The protein resides in the cytoplasm. It catalyses the reaction octanoyl-[ACP] + L-lysyl-[protein] = N(6)-octanoyl-L-lysyl-[protein] + holo-[ACP] + H(+). It participates in protein modification; protein lipoylation via endogenous pathway; protein N(6)-(lipoyl)lysine from octanoyl-[acyl-carrier-protein]: step 1/2. Functionally, catalyzes the transfer of endogenously produced octanoic acid from octanoyl-acyl-carrier-protein onto the lipoyl domains of lipoate-dependent enzymes. Lipoyl-ACP can also act as a substrate although octanoyl-ACP is likely to be the physiological substrate. The polypeptide is Octanoyltransferase (Erwinia tasmaniensis (strain DSM 17950 / CFBP 7177 / CIP 109463 / NCPPB 4357 / Et1/99)).